The primary structure comprises 474 residues: tRNA-2-methylthio-N(6)-dimethylallyladenosine synthase (474 aa).

The region spanning 3–120 (KKLHIKTWGC…LPEMINSVRG (118 aa)) is the MTTase N-terminal domain. Positions 12, 49, 83, 157, 161, and 164 each coordinate [4Fe-4S] cluster. The region spanning 143 to 375 (RAEGPTAFVS…QERINQQAMA (233 aa)) is the Radical SAM core domain. The TRAM domain maps to 378–441 (RRMLGTTQRI…PNSLRGKVVR (64 aa)).

Belongs to the methylthiotransferase family. MiaB subfamily. Monomer. [4Fe-4S] cluster serves as cofactor.

The protein localises to the cytoplasm. It carries out the reaction N(6)-dimethylallyladenosine(37) in tRNA + (sulfur carrier)-SH + AH2 + 2 S-adenosyl-L-methionine = 2-methylsulfanyl-N(6)-dimethylallyladenosine(37) in tRNA + (sulfur carrier)-H + 5'-deoxyadenosine + L-methionine + A + S-adenosyl-L-homocysteine + 2 H(+). Catalyzes the methylthiolation of N6-(dimethylallyl)adenosine (i(6)A), leading to the formation of 2-methylthio-N6-(dimethylallyl)adenosine (ms(2)i(6)A) at position 37 in tRNAs that read codons beginning with uridine. In Salmonella enteritidis PT4 (strain P125109), this protein is tRNA-2-methylthio-N(6)-dimethylallyladenosine synthase.